Reading from the N-terminus, the 515-residue chain is Bifunctional purine biosynthesis protein PurH (515 aa).

An MGS-like domain is found at 1 to 145; that stretch reads MTKRALISVS…KNHASVTVVV (145 aa).

It belongs to the PurH family.

It catalyses the reaction (6R)-10-formyltetrahydrofolate + 5-amino-1-(5-phospho-beta-D-ribosyl)imidazole-4-carboxamide = 5-formamido-1-(5-phospho-D-ribosyl)imidazole-4-carboxamide + (6S)-5,6,7,8-tetrahydrofolate. The enzyme catalyses IMP + H2O = 5-formamido-1-(5-phospho-D-ribosyl)imidazole-4-carboxamide. The protein operates within purine metabolism; IMP biosynthesis via de novo pathway; 5-formamido-1-(5-phospho-D-ribosyl)imidazole-4-carboxamide from 5-amino-1-(5-phospho-D-ribosyl)imidazole-4-carboxamide (10-formyl THF route): step 1/1. Its pathway is purine metabolism; IMP biosynthesis via de novo pathway; IMP from 5-formamido-1-(5-phospho-D-ribosyl)imidazole-4-carboxamide: step 1/1. This Streptococcus suis protein is Bifunctional purine biosynthesis protein PurH.